The primary structure comprises 249 residues: Large ribosomal subunit protein uL22m (249 aa).

The N-terminal 22 residues, 1–22, are a transit peptide targeting the mitochondrion; it reads MKYINQFMKISKGFLVPSSTIG. The interval 70–98 is disordered; the sequence is ANQKDDSNRQQKEERVKERPRSRISFKKQ. The segment covering 72–98 has biased composition (basic and acidic residues); the sequence is QKDDSNRQQKEERVKERPRSRISFKKQ.

It belongs to the universal ribosomal protein uL22 family. As to quaternary structure, component of the mitochondrial large ribosomal subunit (mt-LSU). Mature yeast 74S mitochondrial ribosomes consist of a small (37S) and a large (54S) subunit. The 37S small subunit contains a 15S ribosomal RNA (15S mt-rRNA) and at least 32 different proteins. The 54S large subunit contains a 21S rRNA (21S mt-rRNA) and at least 45 different proteins. uL22m forms the wall of the exit tunnel.

It localises to the mitochondrion. Component of the mitochondrial ribosome (mitoribosome), a dedicated translation machinery responsible for the synthesis of mitochondrial genome-encoded proteins, including at least some of the essential transmembrane subunits of the mitochondrial respiratory chain. The mitoribosomes are attached to the mitochondrial inner membrane and translation products are cotranslationally integrated into the membrane. The chain is Large ribosomal subunit protein uL22m (mrpl22) from Schizosaccharomyces pombe (strain 972 / ATCC 24843) (Fission yeast).